A 131-amino-acid chain; its full sequence is Beta/delta-urticatoxin-Dm2a (131 aa).

An N-terminal signal peptide occupies residues 1–24 (MKSSATVVLLVAAVTAAMVMSSSA). The propeptide occupies 25-69 (SGDAVMIDEHNNIMTSVEGKRGIGSSVVANGGNRKMANVLLSGWE). Disulfide bonds link C72/C88, C79/C93, C87/C101, C103/C117, C110/C122, and C116/C130.

Belongs to the urticatoxin-2 family. Expressed in trichomes, that are stiff epidermal hairs located on the surface of petioles and leaves.

Its subcellular location is the secreted. In terms of biological role, plant defense neurotoxin that causes pain and systemic symptoms in mammals via modulation of voltage-gated sodium channels (Nav). Potent modulator of human Nav1.5/SCN5A (EC(50)=55 nM), Nav1.6/SCN8A (EC(50)=0.86 nM), and Nav1.7/SCN9A (EC(50)=208 nM), where it shifts the activation threshold to more negative potentials and delays fast inactivation. Also shifts the voltage-dependence of steady-state fast inactivation of Nav1.6/SCN8A, but not that of Nav1.5/SCN5A or Nav1.7/SCN9A. On Nav1.7/SCN9A, principally acts by binding to extracellular loops of domain IV (Nav site 3). In vivo, intraplantar injection into mice causes numerous dose-dependent, immediate, and long-lasting spontaneous pain behaviors, while no swelling is observed in the injected paw. At the highest doses tested, systemic symptoms including hypokinesia and hypersalivation are observed. In Dendrocnide moroides (Gympie stinging tree), this protein is Beta/delta-urticatoxin-Dm2a.